Here is a 583-residue protein sequence, read N- to C-terminus: Steryl-sulfatase (583 aa).

The signal sequence occupies residues 1 to 21 (MPLRKMKIPFLLLFFLWEAES). The Lumenal segment spans residues 22-184 (HAASRPNIIL…GSVFTTGFKR (163 aa)). Residues Asp35 and Asp36 each coordinate Ca(2+). Asn47 is a glycosylation site (N-linked (GlcNAc...) asparagine). Cys75 contributes to the Ca(2+) binding site. The Nucleophile role is filled by Cys75. Cys75 is subject to 3-oxoalanine (Cys). Residue His136 is part of the active site. 2 disulfides stabilise this stretch: Cys141-Cys148 and Cys170-Cys242. A helical transmembrane segment spans residues 185-208 (LVFLPLQIVGVTLLTLAALNCLGL). Over 209–212 (LHVP) the chain is Cytoplasmic. A helical membrane pass occupies residues 213–234 (LGVFFSLLFLAALILTLFLGFL). Residues 235–583 (HYFRPLNCFM…REKQDKRLSR (349 aa)) are Lumenal-facing. Asn259 carries an N-linked (GlcNAc...) asparagine glycan. Ca(2+)-binding residues include Asp342 and Gln343. Intrachain disulfides connect Cys446–Cys489, Cys481–Cys487, Cys562–Cys570, and Cys563–Cys572.

Belongs to the sulfatase family. Homodimer. Ca(2+) serves as cofactor. The conversion to 3-oxoalanine (also known as C-formylglycine, FGly), of a serine or cysteine residue in prokaryotes and of a cysteine residue in eukaryotes, is critical for catalytic activity.

The protein resides in the cytoplasmic vesicle. It localises to the secretory vesicle. It is found in the microneme membrane. The protein localises to the endoplasmic reticulum membrane. It catalyses the reaction dehydroepiandrosterone 3-sulfate + H2O = 3beta-hydroxyandrost-5-en-17-one + sulfate + H(+). The catalysed reaction is estrone 3-sulfate + H2O = estrone + sulfate + H(+). Functionally, catalyzes the conversion of sulfated steroid precursors, such as dehydroepiandrosterone sulfate (DHEA-S) and estrone sulfate to the free steroid. This chain is Steryl-sulfatase (STS), found in Homo sapiens (Human).